A 326-amino-acid polypeptide reads, in one-letter code: Transposase InsH for insertion sequence element IS5A (326 aa).

The protein belongs to the transposase 11 family.

Involved in the transposition of the insertion sequence IS5. The polypeptide is Transposase InsH for insertion sequence element IS5A (insH1) (Escherichia coli (strain K12)).